A 198-amino-acid polypeptide reads, in one-letter code: Probable molybdenum cofactor guanylyltransferase (198 aa).

Residues 9–11 (LAG), K22, D66, and D95 each bind GTP. D95 serves as a coordination point for Mg(2+).

The protein belongs to the MobA family. Mg(2+) is required as a cofactor.

The protein localises to the cytoplasm. It carries out the reaction Mo-molybdopterin + GTP + H(+) = Mo-molybdopterin guanine dinucleotide + diphosphate. Transfers a GMP moiety from GTP to Mo-molybdopterin (Mo-MPT) cofactor (Moco or molybdenum cofactor) to form Mo-molybdopterin guanine dinucleotide (Mo-MGD) cofactor. This is Probable molybdenum cofactor guanylyltransferase from Clostridium perfringens (strain 13 / Type A).